The primary structure comprises 144 residues: uncharacterized protein (144 aa).

This is an uncharacterized protein from Saccharomyces cerevisiae (strain ATCC 204508 / S288c) (Baker's yeast).